The chain runs to 83 residues: Pigment-dispersing hormone peptides (83 aa).

An N-terminal signal peptide occupies residues 1-24; sequence MRFIILGVLFIAVASMILSNGVMA. Ala80 is subject to Alanine amide.

It belongs to the arthropod PDH family. Strongly expressed in eyestalk tissue and cerebral ganglia (at protein level).

It localises to the secreted. Functionally, the pigment-dispersing hormone causes the migration of the distal retinal pigment into the proximal end of the pigment chromatophore cells and thus decreases the amount of light entering the retinulas. May also function as a neurotransmitter and/or neuromodulator. The polypeptide is Pigment-dispersing hormone peptides (Eurydice pulchra (Speckled sea louse)).